A 371-amino-acid chain; its full sequence is Surface protein P12p (371 aa).

Positions 1–20 (MHIVSFIIFFFALFFPISIC) are cleaved as a signal peptide. 6-Cys domains follow at residues 23–168 (INGV…LKKN) and 169–343 (ILYG…FSNQ). 4 disulfides stabilise this stretch: Cys-27–Cys-62, Cys-76–Cys-144, Cys-93–Cys-142, and Cys-173–Cys-245. A glycan (N-linked (GlcNAc...) asparagine) is linked at Asn-184. The disordered stretch occupies residues 202-239 (GNNNNDDDNNDDDNNNDNNNNDNNNNNNNNNNNNNNNN). The segment covering 206-216 (NDDDNNDDDNN) has biased composition (acidic residues). The segment covering 217-239 (NDNNNNDNNNNNNNNNNNNNNNN) has biased composition (low complexity). 2 N-linked (GlcNAc...) asparagine glycosylation sites follow: Asn-242 and Asn-246. 2 disulfide bridges follow: Cys-260-Cys-323 and Cys-271-Cys-321.

The protein localises to the cell surface. The protein resides in the cell membrane. In Plasmodium falciparum (isolate 3D7), this protein is Surface protein P12p (PFS12P).